The following is a 469-amino-acid chain: Citrate synthase, mitochondrial (469 aa).

The transit peptide at 1 to 30 directs the protein to the mitochondrion; sequence MSFLSVSRLAPKLLNSKNATYFLVAARNAS. Active-site residues include His-304 and His-350. Residue Arg-359 participates in oxaloacetate binding. The active site involves Asp-405. The oxaloacetate site is built by Arg-431 and Arg-451.

The protein belongs to the citrate synthase family. Homodimer.

The protein resides in the mitochondrion matrix. It carries out the reaction oxaloacetate + acetyl-CoA + H2O = citrate + CoA + H(+). It participates in carbohydrate metabolism; tricarboxylic acid cycle; isocitrate from oxaloacetate: step 1/2. Key enzyme of the Krebs tricarboxylic acid cycle which catalyzes the synthesis of citrate from acetyl coenzyme A and oxaloacetate. The polypeptide is Citrate synthase, mitochondrial (cs) (Katsuwonus pelamis (Skipjack tuna)).